Here is a 608-residue protein sequence, read N- to C-terminus: Aspartate--tRNA(Asp/Asn) ligase (608 aa).

E187 is a binding site for L-aspartate. The segment at 211–214 (QQFK) is aspartate. L-aspartate contacts are provided by R233 and H461. 233–235 (RDE) contributes to the ATP binding site. An ATP-binding site is contributed by E495. R502 contributes to the L-aspartate binding site. ATP is bound at residue 547 to 550 (GLDR).

The protein belongs to the class-II aminoacyl-tRNA synthetase family. Type 1 subfamily. In terms of assembly, homodimer.

Its subcellular location is the cytoplasm. The enzyme catalyses tRNA(Asx) + L-aspartate + ATP = L-aspartyl-tRNA(Asx) + AMP + diphosphate. Aspartyl-tRNA synthetase with relaxed tRNA specificity since it is able to aspartylate not only its cognate tRNA(Asp) but also tRNA(Asn). Reaction proceeds in two steps: L-aspartate is first activated by ATP to form Asp-AMP and then transferred to the acceptor end of tRNA(Asp/Asn). This Prosthecochloris aestuarii (strain DSM 271 / SK 413) protein is Aspartate--tRNA(Asp/Asn) ligase.